The sequence spans 348 residues: Dihydroorotase (348 aa).

Zn(2+) is bound by residues H14 and H16. Residues 16–18 and N42 contribute to the substrate site; that span reads HLR. Residues K100, H137, and H175 each contribute to the Zn(2+) site. N6-carboxylysine is present on K100. H137 contributes to the substrate binding site. L220 contributes to the substrate binding site. D248 provides a ligand contact to Zn(2+). Residue D248 is part of the active site. Substrate contacts are provided by H252 and A264.

It belongs to the metallo-dependent hydrolases superfamily. DHOase family. Class II DHOase subfamily. Homodimer. Zn(2+) is required as a cofactor.

The enzyme catalyses (S)-dihydroorotate + H2O = N-carbamoyl-L-aspartate + H(+). It functions in the pathway pyrimidine metabolism; UMP biosynthesis via de novo pathway; (S)-dihydroorotate from bicarbonate: step 3/3. Its function is as follows. Catalyzes the reversible cyclization of carbamoyl aspartate to dihydroorotate. In Synechococcus sp. (strain CC9605), this protein is Dihydroorotase.